The sequence spans 830 residues: MRHGHPRLLPGLLMLLLLPLGAAAQKTSGCARWCPPKSTCVNATTCRCSPGFSSLSGEIFSSPLESCDDIDECGPPPLVSCGRLADCQNTEGSYHCMCSPGYALASGATTFMNESENTCRDVDECQLKPRVCKSRGICTNTKGSYTCKCPPGFELNLGDLNLCTDVNECTSGQNPCHNSTHCLNNIGGYECRCRPGWKPVPGSPNGPKSTVCEDVDECSSGKHTCHYSTVCINTVGSYKCRCRRGWKPKPRFQDRQLNTTCEVPAEMSFPTWTPPPGIKSQRLSNFFERVQELHRDFKPALAQETIQDLIQEVDELLEIPGDLEALPHSEQHCVATNLLVGLEGVLRNVSQAMPNGPWTFNASAGTDLSLEVQEEGYRNVTLSQNLAKMMLKWDVVHKSGDSGPSVVGLLSTPGMGKLLAEAPLVLEPEKQAVLHGAPKGLLQGVSSVLLSDVISVFMSNKVTQKLSSPVTFIFSHHSATHEPKLKVFCVFWEHSQDECGHWSTRGCTVVDSGDTSTTCQCTHLSSFAVLMAHYDVQEEDLVLPVITYVGLGLSLLCLLLAALTFLLCKAIQNTSTSLHLQLLICLFLAHLLFLMAIDRTEIKVLCSIIAGALHYLYLASFTWMLLEGLHLFLTARNLMVVNYSSVSMLMKKLMYPVGYGVPTLIVAISAASRSHLYGTRTRCWLNPEERFIWSFLGPVCTIFSVNLGFFLMTLWILKSKLSSLNSDVSTLQNTRMLTFKAIAQLFILGCTWCLGILQVGPAAHVMAYLFTIINSLQGVFIFLVYCLLSQQVREEYGKWFKGIRKTRAESEKYTLSSRAMSDVNKPMMVN.

The signal sequence occupies residues Met-1–Ala-22. The Extracellular segment spans residues Ala-23–Asp-540. An EGF-like 1 domain is found at Lys-26 to Asp-68. Intrachain disulfides connect Cys-30–Cys-40, Cys-34–Cys-46, Cys-48–Cys-67, Cys-73–Cys-87, and Cys-81–Cys-96. Residue Asn-42 is glycosylated (N-linked (GlcNAc...) asparagine). Positions Asp-69 to Ala-108 constitute an EGF-like 1; calcium-binding domain. Residue Asn-113 is glycosylated (N-linked (GlcNAc...) asparagine). In terms of domain architecture, EGF-like 2; calcium-binding spans Asp-121–Asp-159. Disulfide bonds link Cys-125–Cys-138, Cys-132–Cys-147, Cys-169–Cys-182, Cys-176–Cys-191, Cys-218–Cys-231, and Cys-225–Cys-240. Residues Asp-165–Ser-203 enclose the EGF-like 3; calcium-binding domain. An N-linked (GlcNAc...) asparagine glycan is attached at Asn-178. The 40-residue stretch at Asp-214–Gln-253 folds into the EGF-like 4; calcium-binding domain. Residues Asn-258, Asn-348, Asn-361, and Asn-379 are each glycosylated (N-linked (GlcNAc...) asparagine). The 180-residue stretch at Trp-358–Gln-537 folds into the GAIN-B domain. 2 disulfides stabilise this stretch: Cys-489–Cys-519 and Cys-507–Cys-521. A GPS region spans residues Cys-489 to Gln-537. A helical membrane pass occupies residues Leu-541 to Ala-561. Residues Ala-562 to Thr-576 are Cytoplasmic-facing. Residues Ser-577–Ile-597 form a helical membrane-spanning segment. At Asp-598–Lys-603 the chain is on the extracellular side. A helical membrane pass occupies residues Val-604 to Met-624. Topologically, residues Leu-625 to Lys-651 are cytoplasmic. Residues Lys-652–Ser-672 traverse the membrane as a helical segment. Residues Arg-673 to Arg-690 are Extracellular-facing. A helical membrane pass occupies residues Phe-691–Leu-711. At Met-712–Gln-744 the chain is on the cytoplasmic side. The chain crosses the membrane as a helical span at residues Leu-745–Val-765. Residues Met-766–Ala-767 are Extracellular-facing. Residues Tyr-768–Leu-788 traverse the membrane as a helical segment. The Cytoplasmic segment spans residues Ser-789–Asn-830.

This sequence belongs to the G-protein coupled receptor 2 family. Adhesion G-protein coupled receptor (ADGR) subfamily. In terms of assembly, forms a heterodimer, consisting of a large extracellular region non-covalently linked to a seven-transmembrane moiety. Interacts with chondroitin sulfate; the interaction with chondroitin sulfate is calcium-dependent. Interacts with CD55. Post-translationally, autoproteolytically cleaved into 2 subunits, an extracellular alpha subunit and a seven-transmembrane beta subunit.

The protein localises to the cell membrane. It is found in the cell projection. Its subcellular location is the ruffle membrane. Functionally, cell surface receptor that binds to the chondroitin sulfate moiety of glycosaminoglycan chains and promotes cell attachment. Promotes granulocyte chemotaxis, degranulation and adhesion. In macrophages, promotes the release of inflammatory cytokines, including IL8 and TNF. Signals probably through G-proteins. This Canis lupus familiaris (Dog) protein is Adhesion G protein-coupled receptor E2 (ADGRE2).